A 387-amino-acid chain; its full sequence is Formate-dependent phosphoribosylglycinamide formyltransferase (387 aa).

N(1)-(5-phospho-beta-D-ribosyl)glycinamide-binding positions include 15 to 16 and E75; that span reads EL. ATP-binding positions include R106, K147, 152 to 157, 187 to 190, and E195; these read SSGKGQ and EEFI. One can recognise an ATP-grasp domain in the interval 111-301; that stretch reads DLASNELNIR…EFELHLRAVL (191 aa). Residues E260 and E272 each contribute to the Mg(2+) site. Residues D279, K349, and 356-357 each bind N(1)-(5-phospho-beta-D-ribosyl)glycinamide; that span reads RR.

This sequence belongs to the PurK/PurT family. Homodimer.

The catalysed reaction is N(1)-(5-phospho-beta-D-ribosyl)glycinamide + formate + ATP = N(2)-formyl-N(1)-(5-phospho-beta-D-ribosyl)glycinamide + ADP + phosphate + H(+). It functions in the pathway purine metabolism; IMP biosynthesis via de novo pathway; N(2)-formyl-N(1)-(5-phospho-D-ribosyl)glycinamide from N(1)-(5-phospho-D-ribosyl)glycinamide (formate route): step 1/1. Functionally, involved in the de novo purine biosynthesis. Catalyzes the transfer of formate to 5-phospho-ribosyl-glycinamide (GAR), producing 5-phospho-ribosyl-N-formylglycinamide (FGAR). Formate is provided by PurU via hydrolysis of 10-formyl-tetrahydrofolate. This chain is Formate-dependent phosphoribosylglycinamide formyltransferase, found in Prochlorococcus marinus (strain NATL2A).